A 256-amino-acid chain; its full sequence is H-2 class II histocompatibility antigen, A-K alpha chain (256 aa).

A signal peptide spans M1–G23. The alpha-1 stretch occupies residues E24–N111. Residues E24–E218 lie on the Extracellular side of the membrane. 2 N-linked (GlcNAc...) asparagine glycosylation sites follow: N105 and N145. Residues E112–W205 form an alpha-2 region. One can recognise an Ig-like C1-type domain in the interval P114–E206. Cysteines 134 and 190 form a disulfide. The interval E206–E218 is connecting peptide. The helical transmembrane segment at T219–I241 threads the bilayer. Over Q242–L256 the chain is Cytoplasmic.

Belongs to the MHC class II family.

It is found in the membrane. This is H-2 class II histocompatibility antigen, A-K alpha chain (H2-Aa) from Mus musculus (Mouse).